Reading from the N-terminus, the 492-residue chain is Protein GvpD2 (492 aa).

39–46 (GAPGTGKT) contributes to the ATP binding site. Over residues 355–368 (RDHDDAVDPDRLPG) the composition is skewed to basic and acidic residues. Residues 355–379 (RDHDDAVDPDRLPGHDTTPTEHGTL) are disordered.

Belongs to the gas vesicle GvpD family. In terms of assembly, homodimer. Interacts with GvpE, also with GvpE from H.mediterranei.

It is found in the cytoplasm. Functionally, causes a decrease in the amount of GvpE protein. Gas vesicles are hollow, gas filled proteinaceous nanostructures found in several microbial planktonic microorganisms. They allow positioning of halobacteria at the optimal depth for growth in the poorly aerated, shallow brine pools of their habitat. Its function is as follows. Expression of 2 c-vac DNA fragments containing 2 divergently transcribed regions (gvpE-gvpF-gvpG-gvpH-gvpI-gvpJ-gvpK-gvpL-gvpM and gvpA-gvpC-gvpN-gvpO) allows H.volcanii to produce gas vesicles. In Halobacterium salinarum (strain ATCC 700922 / JCM 11081 / NRC-1) (Halobacterium halobium), this protein is Protein GvpD2.